The primary structure comprises 151 residues: Arginine repressor (151 aa).

This sequence belongs to the ArgR family.

It is found in the cytoplasm. Its pathway is amino-acid biosynthesis; L-arginine biosynthesis [regulation]. Regulates arginine biosynthesis genes. This Haemophilus influenzae (strain PittGG) protein is Arginine repressor.